A 242-amino-acid chain; its full sequence is Ubiquinone biosynthesis O-methyltransferase (242 aa).

4 residues coordinate S-adenosyl-L-methionine: Arg-44, Gly-64, Asp-85, and Met-129.

The protein belongs to the methyltransferase superfamily. UbiG/COQ3 family.

The enzyme catalyses a 3-demethylubiquinol + S-adenosyl-L-methionine = a ubiquinol + S-adenosyl-L-homocysteine + H(+). It carries out the reaction a 3-(all-trans-polyprenyl)benzene-1,2-diol + S-adenosyl-L-methionine = a 2-methoxy-6-(all-trans-polyprenyl)phenol + S-adenosyl-L-homocysteine + H(+). It functions in the pathway cofactor biosynthesis; ubiquinone biosynthesis. In terms of biological role, O-methyltransferase that catalyzes the 2 O-methylation steps in the ubiquinone biosynthetic pathway. The protein is Ubiquinone biosynthesis O-methyltransferase of Klebsiella pneumoniae (strain 342).